The chain runs to 854 residues: Armadillo repeat-containing protein 2 (854 aa).

Disordered regions lie at residues 1 to 116 (MLSS…SFPK), 140 to 194 (QGML…PLLT), and 206 to 255 (EVSL…ETDT). The segment covering 58-73 (PASSRSPENRPPSSFS) has biased composition (low complexity). Polar residues-rich tracts occupy residues 74 to 87 (LHASSFELSDSKPI) and 162 to 187 (KPVSVGSSTARRNGTHLTASSATGQL). ARM repeat units follow at residues 255–294 (TEVDEVFWKARIVPILHELENEEDIEEMCAACTQLHRTLE), 298–337 (MLGKKFKRRTVLLKALYKLVDADSDPLSLKLAKLILALKV), 356–396 (EKND…ALKF), 401–442 (PGFL…HLLV), 455–496 (PLTR…KLTS), 499–540 (DCCA…NLTA), 544–583 (QARELFSRETGSVETLLTLFQSFYHHKENSPKLQLSEAKP), 585–605 (AEAEDVLVKLTRVLANIAIHP), 606–649 (RIGP…NLSF), 651–692 (QVKS…NLSQ), 694–733 (HDVCNFLMQKNVHKFMITLLEAKHQDICFSACGVLLNLTV), and 735–777 (KEKR…NFSE).

Its function is as follows. Required for sperm flagellum axoneme organization and function. Involved in axonemal central pair complex assembly and/or stability. The sequence is that of Armadillo repeat-containing protein 2 from Mus musculus (Mouse).